The primary structure comprises 447 residues: N-succinylarginine dihydrolase (447 aa).

Residues 19 to 28, Asn-110, and 137 to 138 contribute to the substrate site; these read AGLSFGNEAS and HR. Residue Glu-174 is part of the active site. Arg-212 provides a ligand contact to substrate. His-248 is an active-site residue. Residues Asp-250 and Asn-359 each coordinate substrate. The active-site Nucleophile is Cys-365.

This sequence belongs to the succinylarginine dihydrolase family. As to quaternary structure, homodimer.

The catalysed reaction is N(2)-succinyl-L-arginine + 2 H2O + 2 H(+) = N(2)-succinyl-L-ornithine + 2 NH4(+) + CO2. The protein operates within amino-acid degradation; L-arginine degradation via AST pathway; L-glutamate and succinate from L-arginine: step 2/5. Functionally, catalyzes the hydrolysis of N(2)-succinylarginine into N(2)-succinylornithine, ammonia and CO(2). The chain is N-succinylarginine dihydrolase from Salmonella typhi.